A 421-amino-acid polypeptide reads, in one-letter code: Stemmadenine O-acetyltransferase (421 aa).

A disordered region spans residues 1–21; that stretch reads MAPQMQILSEELIQPSSPTPQ. Catalysis depends on proton acceptor residues His160 and Asp362.

It belongs to the plant acyltransferase family. As to quaternary structure, monomer. As to expression, expressed in leaf epidermis.

It catalyses the reaction 15alpha-stemmadenine + acetyl-CoA = O-acetyl-15alpha-stemmadenine + CoA. It functions in the pathway alkaloid biosynthesis. Component of iboga and aspidosperma monoterpenoid indole alkaloids (MIAs, e.g. tabersonine and catharanthine) biosynthesis pathway from 19E-geissoschizine. Acetyltransferase that catalyzes the formation of O-acetylstemmadenine from stemmadenine. The sequence is that of Stemmadenine O-acetyltransferase from Catharanthus roseus (Madagascar periwinkle).